The sequence spans 210 residues: Large ribosomal subunit protein uL3 (210 aa).

A disordered region spans residues 121 to 150; it reads GGIKRHGFHRGPMAHGSKYHRRPGSLGAKG.

Belongs to the universal ribosomal protein uL3 family. Part of the 50S ribosomal subunit. Forms a cluster with proteins L14 and L19.

Functionally, one of the primary rRNA binding proteins, it binds directly near the 3'-end of the 23S rRNA, where it nucleates assembly of the 50S subunit. The chain is Large ribosomal subunit protein uL3 from Pelotomaculum thermopropionicum (strain DSM 13744 / JCM 10971 / SI).